A 122-amino-acid polypeptide reads, in one-letter code: Selenoprotein H (122 aa).

Lys20 carries the N6-acetyllysine modification. Residues 41–44 (CTSU) constitute a cross-link (cysteinyl-selenocysteine (Cys-Sec); redox-active). Sec44 is a non-standard amino acid (selenocysteine).

Belongs to the SelWTH family.

Its function is as follows. May be involved in a redox-related process. The polypeptide is Selenoprotein H (Macaca fascicularis (Crab-eating macaque)).